The sequence spans 306 residues: Glutamyl-Q tRNA(Asp) synthetase (306 aa).

L-glutamate is bound by residues 4–8 (RYAPS) and E40. A 'HIGH' region motif is present at residues 7 to 17 (PSPSGDLHFGN). Positions 92, 94, 113, and 117 each coordinate Zn(2+). 2 residues coordinate L-glutamate: Y180 and R198. Positions 236-240 (RLAKR) match the 'KMSKS' region motif. An ATP-binding site is contributed by K239.

Belongs to the class-I aminoacyl-tRNA synthetase family. GluQ subfamily. The cofactor is Zn(2+).

Functionally, catalyzes the tRNA-independent activation of glutamate in presence of ATP and the subsequent transfer of glutamate onto a tRNA(Asp). Glutamate is transferred on the 2-amino-5-(4,5-dihydroxy-2-cyclopenten-1-yl) moiety of the queuosine in the wobble position of the QUC anticodon. The polypeptide is Glutamyl-Q tRNA(Asp) synthetase (Corynebacterium efficiens (strain DSM 44549 / YS-314 / AJ 12310 / JCM 11189 / NBRC 100395)).